We begin with the raw amino-acid sequence, 380 residues long: O-phospho-L-seryl-tRNA:Cys-tRNA synthase (380 aa).

Pyridoxal 5'-phosphate contacts are provided by residues 86 to 87, Asn192, and 215 to 217; these read AR and SGH. N6-(pyridoxal phosphate)lysine is present on Lys218.

The protein belongs to the SepCysS family. As to quaternary structure, homodimer. Interacts with SepRS. It depends on pyridoxal 5'-phosphate as a cofactor.

It catalyses the reaction O-phospho-L-seryl-tRNA(Cys) + hydrogen sulfide + H(+) = L-cysteinyl-tRNA(Cys) + phosphate. Functionally, converts O-phospho-L-seryl-tRNA(Cys) (Sep-tRNA(Cys)) to L-cysteinyl-tRNA(Cys) (Cys-tRNA(Cys)). This is O-phospho-L-seryl-tRNA:Cys-tRNA synthase from Methanococcus maripaludis (strain DSM 14266 / JCM 13030 / NBRC 101832 / S2 / LL).